Consider the following 49-residue polypeptide: U1-theraphotoxin-Lp1b (49 aa).

4 disulfide bridges follow: cysteine 4/cysteine 17, cysteine 8/cysteine 41, cysteine 22/cysteine 24, and cysteine 35/cysteine 46.

As to expression, expressed by the venom gland.

It is found in the secreted. Functionally, toxin that causes irreversible contractile paralysis into adult Aedes aegypti resulting in 100% mortality after 24 hours. The sequence is that of U1-theraphotoxin-Lp1b from Lasiodora parahybana (Brazilian salmon pink birdeater).